We begin with the raw amino-acid sequence, 446 residues long: Phosphoglucosamine mutase (446 aa).

The Phosphoserine intermediate role is filled by Ser101. Mg(2+)-binding residues include Ser101, Asp240, Asp242, and Asp244. Ser101 is modified (phosphoserine).

It belongs to the phosphohexose mutase family. Mg(2+) serves as cofactor. Post-translationally, activated by phosphorylation.

The catalysed reaction is alpha-D-glucosamine 1-phosphate = D-glucosamine 6-phosphate. In terms of biological role, catalyzes the conversion of glucosamine-6-phosphate to glucosamine-1-phosphate. The protein is Phosphoglucosamine mutase of Pseudomonas putida (strain ATCC 700007 / DSM 6899 / JCM 31910 / BCRC 17059 / LMG 24140 / F1).